Consider the following 356-residue polypeptide: Tetraacyldisaccharide 4'-kinase (356 aa).

67-74 (FVGGTGKT) contacts ATP.

It belongs to the LpxK family.

The enzyme catalyses a lipid A disaccharide + ATP = a lipid IVA + ADP + H(+). The protein operates within glycolipid biosynthesis; lipid IV(A) biosynthesis; lipid IV(A) from (3R)-3-hydroxytetradecanoyl-[acyl-carrier-protein] and UDP-N-acetyl-alpha-D-glucosamine: step 6/6. Its function is as follows. Transfers the gamma-phosphate of ATP to the 4'-position of a tetraacyldisaccharide 1-phosphate intermediate (termed DS-1-P) to form tetraacyldisaccharide 1,4'-bis-phosphate (lipid IVA). In Herminiimonas arsenicoxydans, this protein is Tetraacyldisaccharide 4'-kinase.